The sequence spans 390 residues: Putative gustatory receptor 36c (390 aa).

Residues 1-4 (MDLE) lie on the Cytoplasmic side of the membrane. A helical transmembrane segment spans residues 5-25 (SFLLGAVYYYGLFIGLSNFEF). At 26–36 (DWNTGRVFTKK) the chain is on the extracellular side. Residues 37-57 (WSTLYAIALDSCIFALYIYHW) traverse the membrane as a helical segment. The Cytoplasmic segment spans residues 58–75 (TGNTNIVNAIFGRANMLH). Residues 76-96 (EYVVAILTGLRIVTGLFTLIL) form a helical membrane-spanning segment. Residues 97 to 132 (RWYQRCKMMDLASKVVRMYVARPQVRRMSRWGILTK) lie on the Extracellular side of the membrane. Residues 133–153 (FIFGSITDGLQMAMVLSAMGS) traverse the membrane as a helical segment. The Cytoplasmic segment spans residues 154-165 (VDSQFYLGLGLQ). Residues 166–186 (YWMFVILNMAMMQQHMIMLFV) form a helical membrane-spanning segment. Residues 187-254 (RTQFQLINTE…MEEVFGIQGA (68 aa)) lie on the Extracellular side of the membrane. A helical transmembrane segment spans residues 255-275 (MTYGGYYLSSVGTCYLAYSIL). The Cytoplasmic portion of the chain corresponds to 276–288 (KHGYENLSMTLST). A helical membrane pass occupies residues 289–309 (VILAYSWCFFYYLDGMLNLSV). At 310-390 (MLHVQDDYWE…FLIQYDIEHF (81 aa)) the chain is on the extracellular side.

It belongs to the insect chemoreceptor superfamily. Gustatory receptor (GR) family. Gr22e subfamily. Expressed in neurons of the terminal external chemosensory organ of larvae.

The protein resides in the cell membrane. Probable gustatory receptor which mediates acceptance or avoidance behavior, depending on its substrates. The polypeptide is Putative gustatory receptor 36c (Gr36c) (Drosophila melanogaster (Fruit fly)).